The following is an 86-amino-acid chain: Immunity protein CdiI-1 (86 aa).

As to quaternary structure, interacts with the C-terminal fragment (CT) of cognate toxin protein CdiA-EC869.

Its function is as follows. Immunity protein component of a toxin-immunity protein module, which functions as a cellular contact-dependent growth inhibition (CDI) system. CDI modules allow bacteria to communicate with and inhibit the growth of closely related neighboring bacteria in a contact-dependent fashion. Neutralizes the toxic activity of cognate toxin CdiA-EC869 (the C-terminal 289 residue CT fragment). Does not inhibit toxic activity of CdiA from other toxin-immunity modules or strains of E.coli. The sequence is that of Immunity protein CdiI-1 from Escherichia coli O157:H7 (strain EC869).